Here is an 877-residue protein sequence, read N- to C-terminus: MVTSLIVRLVAWSVRRPVWVVVLSLLIAAFSGVYVARHFKINTDISKLVDAEPQWAALSQAVDRAFPQRNGTILAVVEAPAPEFATAAAHALTESLQKQAAAGRIGPVAEPGGGPFFEHNGLLFLSPQQVADTTSQLASARPLVNELAKNPSLTGLATTLSTTLGQPLLTGQVKLPSMAKLLSRSAATVDDVLAGKPAAFSWRALVDNDAARQPARAFVTVQPVVNYGALKAGAQTSDVIRETARALDLEKRYGAVVRLTGEQPLADDEFSSVEDGAALNGVVTLLVVFVILWLALRSKRMIASVLVTLFVGLVVTAALGLAMVGSLNMISVAFMVLFVGLGVDFSIQYGVKYREERFRDERIDHALIGAAHSMGMPLALATTAVAASFFSFIPTAYRGVSELGLIAGVGMFVALLTTLTLLPALLRLFAPPGESKTPGFPWLAPVDDYLDRHRKPILIGTLAVVIGALPLLAFLHFDFNPLHLKDPHSESMSTLLALKDSPEAAVNDVTLLAPSLADADAAAKRLDALPEVGRTTTLSTFIPADQPEKRAAIATAASTLLPALTQPPAPPATDAQRVAALKRASDLLGYAAEDHPGPGAAAAQHLSQSLAKLAAADSATRDRAERAFADTLRIALNQLAALLQPQEITRDTLPPPLVRDWVAPDGKALVQISPKVPKGVDPNDDTMLRHFATAVKAAEPGAIGGPISILHSANTIISAFLHAALWSIISITILLWITLRRFGDVLRTLVPLLVSGIVTLEMCVVLGMSLNFANIIALPLMLGVGVAFKVYFVMAWRAGQTGLLHSSLTHAVLFSAATTATAFGSLWLSHHPGTSSMGKLLALALTCTLIGAVVFQPVLMGKPRVKRAKNQSQGINE.

Residues 1-16 lie on the Cytoplasmic side of the membrane; the sequence is MVTSLIVRLVAWSVRR. The chain crosses the membrane as a helical span at residues 17–37; the sequence is PVWVVVLSLLIAAFSGVYVAR. Over 38–279 the chain is Periplasmic; the sequence is HFKINTDISK…FSSVEDGAAL (242 aa). The helical transmembrane segment at 280-295 threads the bilayer; that stretch reads NGVVTLLVVFVILWLA. Topologically, residues 296–299 are cytoplasmic; the sequence is LRSK. A helical transmembrane segment spans residues 300-323; the sequence is RMIASVLVTLFVGLVVTAALGLAM. The 127-residue stretch at 302-428 folds into the SSD domain; sequence IASVLVTLFV…LTLLPALLRL (127 aa). Over 324-332 the chain is Periplasmic; that stretch reads VGSLNMISV. Residues 333–351 form a helical membrane-spanning segment; that stretch reads AFMVLFVGLGVDFSIQYGV. Over 352–373 the chain is Cytoplasmic; that stretch reads KYREERFRDERIDHALIGAAHS. A helical membrane pass occupies residues 374–394; sequence MGMPLALATTAVAASFFSFIP. Over 395–399 the chain is Periplasmic; the sequence is TAYRG. A helical transmembrane segment spans residues 400–426; that stretch reads VSELGLIAGVGMFVALLTTLTLLPALL. Over 427 to 452 the chain is Cytoplasmic; the sequence is RLFAPPGESKTPGFPWLAPVDDYLDR. The helical transmembrane segment at 453–472 threads the bilayer; it reads HRKPILIGTLAVVIGALPLL. The Periplasmic segment spans residues 473–718; sequence AFLHFDFNPL…ILHSANTIIS (246 aa). Residues 719-739 traverse the membrane as a helical segment; the sequence is AFLHAALWSIISITILLWITL. Topologically, residues 740 to 743 are cytoplasmic; sequence RRFG. The helical transmembrane segment at 744–766 threads the bilayer; it reads DVLRTLVPLLVSGIVTLEMCVVL. The Periplasmic portion of the chain corresponds to 767-774; the sequence is GMSLNFAN. The helical transmembrane segment at 775 to 794 threads the bilayer; it reads IIALPLMLGVGVAFKVYFVM. The Cytoplasmic portion of the chain corresponds to 795–809; the sequence is AWRAGQTGLLHSSLT. Residues 810–827 traverse the membrane as a helical segment; sequence HAVLFSAATTATAFGSLW. Over 828–836 the chain is Periplasmic; sequence LSHHPGTSS. The helical transmembrane segment at 837-858 threads the bilayer; it reads MGKLLALALTCTLIGAVVFQPV. The Cytoplasmic portion of the chain corresponds to 859–877; the sequence is LMGKPRVKRAKNQSQGINE.

The protein belongs to the resistance-nodulation-cell division (RND) (TC 2.A.6) family. MmpL subfamily. Homodimer.

It localises to the cell inner membrane. In terms of biological role, essential for hopanoid transport from the cytoplasmic to the outer membrane. Is capable of shuttling hopanoid lipids from the inner membrane to the periplasm, where they probably spontaneously insert to the inner leaflet of the outer membrane, strengthening the cell envelope. May be a proton-motive-force (PMF)-dependent transporter. Is critical for multidrug resistance and cell wall remodeling in Burkholderia. In Burkholderia multivorans (strain ATCC 17616 / 249), this protein is Hopanoid transporter HpnN.